Reading from the N-terminus, the 205-residue chain is Probable GTP-binding protein EngB (205 aa).

The region spanning 27 to 201 (TGIEIAFAGR…AAKLDFWFSP (175 aa)) is the EngB-type G domain. GTP contacts are provided by residues 35-42 (GRSNAGKS), 62-66 (GRTQL), 80-83 (DLPG), 147-150 (TKAD), and 180-182 (FSA). Residues Ser42 and Thr64 each coordinate Mg(2+).

Belongs to the TRAFAC class TrmE-Era-EngA-EngB-Septin-like GTPase superfamily. EngB GTPase family. Mg(2+) serves as cofactor.

Functionally, necessary for normal cell division and for the maintenance of normal septation. This chain is Probable GTP-binding protein EngB, found in Haemophilus influenzae (strain PittEE).